A 60-amino-acid polypeptide reads, in one-letter code: Large ribosomal subunit protein bL32 (60 aa).

Residues 1 to 19 (MAVPKRKKSKSRRNMHRSH) show a composition bias toward basic residues. A disordered region spans residues 1-24 (MAVPKRKKSKSRRNMHRSHHAIEP).

This sequence belongs to the bacterial ribosomal protein bL32 family.

In Wolbachia pipientis wMel, this protein is Large ribosomal subunit protein bL32.